Here is a 416-residue protein sequence, read N- to C-terminus: Adipocyte plasma membrane-associated protein (416 aa).

Residues 1 to 39 (MNEPEGLRFRRLNRPQIITDELQEPQYKGTSTYSGKVFR) are Cytoplasmic-facing. A helical transmembrane segment spans residues 40-60 (VILVTLGGCLILPLLVVFFLL). Topologically, residues 61 to 412 (ESPIHPELLS…FRSPYLCKLD (352 aa)) are extracellular. Residue Asn160 is glycosylated (N-linked (GlcNAc...) asparagine).

This sequence belongs to the strictosidine synthase family.

It localises to the membrane. The sequence is that of Adipocyte plasma membrane-associated protein (apmap) from Salmo salar (Atlantic salmon).